The following is a 942-amino-acid chain: Apolipoprotein B receptor (942 aa).

Disordered stretches follow at residues 66 to 212 (GLRS…VTED), 240 to 269 (ERMVPMRDGERARAQGTQCPGAESEDQAML), 283 to 487 (DSLG…SPER), 501 to 607 (AGPE…VPWE), and 671 to 942 (EGRG…PKPQ). Basic and acidic residues-rich tracts occupy residues 106-123 (QAERQDTGSWKAAEDARG), 132-143 (PEAEPGTHRDRS), 240-252 (ERMVPMRDGERAR), 312-330 (EADKGDQQDEVDEKREAEV), and 338-352 (EAERTGEMTEGHIAE). Acidic residues predominate over residues 353-370 (EEAMGEQETEGSFEDEER). Ser364 is subject to Phosphoserine. The segment covering 384 to 397 (EEVRAEESSREKRN) has biased composition (basic and acidic residues). Positions 415-425 (PDWEDSPEVST) are enriched in acidic residues. Composition is skewed to basic and acidic residues over residues 444 to 458 (LRVKVTEGQDPELVR) and 466 to 475 (QLEEGQKGQE). Residues Ser484 and Ser520 each carry the phosphoserine modification. Composition is skewed to basic and acidic residues over residues 514–531 (GVDRRNSQEVKADAEAGK) and 672–687 (GRGEAGRGTELEETTE). The segment covering 709–721 (QEIDGTEEGEQAE) has biased composition (acidic residues). A compositionally biased stretch (low complexity) spans 837–853 (SRLDVSVPRSRVLLSRS). Residues 854 to 863 (SSRRRSRPSF) are compositionally biased toward basic residues.

As to quaternary structure, homodimer. In terms of processing, there are 2 forms in macrophages, the membrane-binding proteins 200 kDa (MBP 200) and 235 kDa (MBP 235), that can be reduced into a single active ligand-binding species with intermediate mobility (MBP 200R). As to expression, highly expressed in spleen, lung and skeletal muscle, and weakly in brain, heart, kidney, and testis.

The protein localises to the cell membrane. Macrophage receptor that binds to the apolipoprotein B48 (APOB) of dietary triglyceride (TG)-rich lipoproteins (TRL) or to a like domain of APOB in hypertriglyceridemic very low density lipoprotein (HTG-VLDL). Binds and internalizes TRL when out of the context of the macrophage. May provide essential lipids to reticuloendothelial cells. Could also be involved in foam cell formation with elevated TRL and remnant lipoprotein (RLP). Mediates the rapid high-affinity uptake of chylomicrons (CM), HTG-VLDL, and trypsinized (tryp) VLDL devoid of APOE in vitro in macrophages. This is Apolipoprotein B receptor from Mus musculus (Mouse).